The sequence spans 125 residues: Fluoride-specific ion channel FluC (125 aa).

Transmembrane regions (helical) follow at residues 1–21, 32–52, 68–88, and 101–121; these read MIQALLVAVGGAIGSLLRYYV, AFPWGTLAVNVVGCFVIGVFA, LLITGFLGGFTTFSAFSLDAI, and IYTVASVGLSMAAVMAGLAVM. Na(+) contacts are provided by Gly75 and Thr78.

This sequence belongs to the fluoride channel Fluc/FEX (TC 1.A.43) family.

Its subcellular location is the cell inner membrane. It carries out the reaction fluoride(in) = fluoride(out). Na(+) is not transported, but it plays an essential structural role and its presence is essential for fluoride channel function. Functionally, fluoride-specific ion channel. Important for reducing fluoride concentration in the cell, thus reducing its toxicity. This Rhizobium leguminosarum bv. trifolii (strain WSM2304) protein is Fluoride-specific ion channel FluC.